A 235-amino-acid polypeptide reads, in one-letter code: Mediator of RNA polymerase II transcription subunit 7 (235 aa).

The protein belongs to the Mediator complex subunit 7 family. In terms of assembly, component of the Mediator complex.

It is found in the nucleus. Component of the Mediator complex, a coactivator involved in the regulated transcription of nearly all RNA polymerase II-dependent genes. Mediator functions as a bridge to convey information from gene-specific regulatory proteins to the basal RNA polymerase II transcription machinery. Mediator is recruited to promoters by direct interactions with regulatory proteins and serves as a scaffold for the assembly of a functional preinitiation complex with RNA polymerase II and the general transcription factors. This is Mediator of RNA polymerase II transcription subunit 7 (MED7) from Yarrowia lipolytica (strain CLIB 122 / E 150) (Yeast).